Consider the following 693-residue polypeptide: UvrABC system protein C (693 aa).

The GIY-YIG domain occupies 16-95 (DAPGVYRFRD…IKEFDPRFNV (80 aa)). The UVR domain occupies 208-243 (GVFLRRLESEMAAASAELDFERAARVRDDINALRRV). Residues 656 to 693 (APSPDDATTEPGAVGEPGTADGAAADPDGRDAVVVPEG) are disordered. A compositionally biased stretch (low complexity) spans 672-693 (PGTADGAAADPDGRDAVVVPEG).

The protein belongs to the UvrC family. Interacts with UvrB in an incision complex.

Its subcellular location is the cytoplasm. The UvrABC repair system catalyzes the recognition and processing of DNA lesions. UvrC both incises the 5' and 3' sides of the lesion. The N-terminal half is responsible for the 3' incision and the C-terminal half is responsible for the 5' incision. This is UvrABC system protein C from Beutenbergia cavernae (strain ATCC BAA-8 / DSM 12333 / CCUG 43141 / JCM 11478 / NBRC 16432 / NCIMB 13614 / HKI 0122).